The following is a 290-amino-acid chain: Phosphate import ATP-binding protein PstB (290 aa).

The ABC transporter domain occupies M43–I285. G75–S82 is a binding site for ATP.

It belongs to the ABC transporter superfamily. Phosphate importer (TC 3.A.1.7) family. As to quaternary structure, the complex is composed of two ATP-binding proteins (PstB), two transmembrane proteins (PstC and PstA) and a solute-binding protein (PstS).

The protein localises to the cell inner membrane. The enzyme catalyses phosphate(out) + ATP + H2O = ADP + 2 phosphate(in) + H(+). Functionally, part of the ABC transporter complex PstSACB involved in phosphate import. Responsible for energy coupling to the transport system. This is Phosphate import ATP-binding protein PstB from Pseudoalteromonas atlantica (strain T6c / ATCC BAA-1087).